A 315-amino-acid polypeptide reads, in one-letter code: Shiga-like toxin 1 subunit A (315 aa).

An N-terminal signal peptide occupies residues 1-22 (MKIIIFRVLTFFFVIFSVNVVA). The A1 stretch occupies residues 23-273 (KEFTLDFSTA…CHHHASRVAR (251 aa)). Glutamate 189 is an active-site residue. A disulfide bridge links cysteine 264 with cysteine 283. Residues 274–315 (MASDEFPSMCPADGRVRGITHNKILWDSSTLGAILMRRTISS) are A2.

Belongs to the ribosome-inactivating protein family. As to quaternary structure, shiga-like toxin contains a single subunit A and five copies of subunit B.

The protein localises to the secreted. The catalysed reaction is Endohydrolysis of the N-glycosidic bond at one specific adenosine on the 28S rRNA.. Functionally, the A subunit is responsible for inhibiting protein synthesis through the catalytic inactivation of 60S ribosomal subunits. After endocytosis, the A subunit is cleaved by furin in two fragments, A1 and A2: A1 is the catalytically active fragment, and A2 is essential for holotoxin assembly with the B subunits. The polypeptide is Shiga-like toxin 1 subunit A (stxA) (Escherichia coli (Bacteriophage H19B)).